Reading from the N-terminus, the 336-residue chain is Protein-glutamate methylesterase/protein-glutamine glutaminase 1 (336 aa).

One can recognise a Response regulatory domain in the interval 2-119; the sequence is KIAIVNDMPL…GNPQEAAAPL (118 aa). Aspartate 53 is modified (4-aspartylphosphate). Residues 147-336 enclose the CheB-type methylesterase domain; the sequence is TASRQRLVAI…APRLLEIFPK (190 aa). Catalysis depends on residues serine 159, histidine 186, and aspartate 279.

The protein belongs to the CheB family. Post-translationally, phosphorylated by CheA. Phosphorylation of the N-terminal regulatory domain activates the methylesterase activity.

The protein localises to the cytoplasm. The catalysed reaction is [protein]-L-glutamate 5-O-methyl ester + H2O = L-glutamyl-[protein] + methanol + H(+). It carries out the reaction L-glutaminyl-[protein] + H2O = L-glutamyl-[protein] + NH4(+). Functionally, involved in chemotaxis. Part of a chemotaxis signal transduction system that modulates chemotaxis in response to various stimuli. Catalyzes the demethylation of specific methylglutamate residues introduced into the chemoreceptors (methyl-accepting chemotaxis proteins or MCP) by CheR. Also mediates the irreversible deamidation of specific glutamine residues to glutamic acid. The polypeptide is Protein-glutamate methylesterase/protein-glutamine glutaminase 1 (Pseudomonas fluorescens (strain Pf0-1)).